The primary structure comprises 495 residues: uncharacterized protein (495 aa).

Residues 16–74 (SSKRGDLIELAVTALDEDGNGIGTHDGTNVHVIGALPDERVRARLTHVGKRHLHAEAVE) enclose the TRAM domain. [4Fe-4S] cluster contacts are provided by cysteine 88, cysteine 94, cysteine 97, and cysteine 175. 4 residues coordinate S-adenosyl-L-methionine: glutamine 299, tyrosine 328, glutamate 349, and asparagine 397. Residue cysteine 424 is the Nucleophile of the active site. Basic and acidic residues predominate over residues 472 to 483 (DRLESPAKERSR). The tract at residues 472–495 (DRLESPAKERSRPRASHKAKGGAV) is disordered. Residues 484–495 (PRASHKAKGGAV) show a composition bias toward basic residues.

This sequence belongs to the class I-like SAM-binding methyltransferase superfamily. RNA M5U methyltransferase family.

This is an uncharacterized protein from Geobacter sulfurreducens (strain ATCC 51573 / DSM 12127 / PCA).